Reading from the N-terminus, the 171-residue chain is UPF0398 protein SEQ_1788 (171 aa).

It belongs to the UPF0398 family.

This chain is UPF0398 protein SEQ_1788, found in Streptococcus equi subsp. equi (strain 4047).